We begin with the raw amino-acid sequence, 346 residues long: 36.4 kDa proline-rich protein (346 aa).

The disordered stretch occupies residues Pro-11–Ile-144. Pro residues-rich tracts occupy residues Lys-25–Pro-42, Val-51–Pro-81, and Gln-89–Ile-144.

The protein is 36.4 kDa proline-rich protein (TPRP-F1) of Solanum lycopersicum (Tomato).